The following is a 291-amino-acid chain: Ribosomal protein L11 methyltransferase (291 aa).

S-adenosyl-L-methionine contacts are provided by threonine 136, glycine 159, aspartate 181, and asparagine 228.

Belongs to the methyltransferase superfamily. PrmA family.

The protein resides in the cytoplasm. It catalyses the reaction L-lysyl-[protein] + 3 S-adenosyl-L-methionine = N(6),N(6),N(6)-trimethyl-L-lysyl-[protein] + 3 S-adenosyl-L-homocysteine + 3 H(+). Functionally, methylates ribosomal protein L11. The protein is Ribosomal protein L11 methyltransferase of Sinorhizobium fredii (strain NBRC 101917 / NGR234).